The chain runs to 186 residues: MAAARAGVLGVRWLQKAARNVVPLGARTASHITKDMLPGPYPKTPEERAAAAKKYNMRVEDYEPYPDDGTGYGDYPKLPDRSQQERDPWYDWDHPDLRLNWGEPMHWDLDMYIRNRVDTSPTPVNWNLMCKHLFGFVAFMLFMFWVGETYPAYQPVGPKQYPYNNLYLERGGDPNKEPEPVVHYEI.

The transit peptide at 1–28 directs the protein to the mitochondrion; that stretch reads MAAARAGVLGVRWLQKAARNVVPLGART. Residues 133-153 form a helical membrane-spanning segment; the sequence is LFGFVAFMLFMFWVGETYPAY.

It belongs to the complex I NDUFB8 subunit family. As to quaternary structure, complex I is composed of 45 different subunits.

It localises to the mitochondrion inner membrane. Accessory subunit of the mitochondrial membrane respiratory chain NADH dehydrogenase (Complex I), that is believed not to be involved in catalysis. Complex I functions in the transfer of electrons from NADH to the respiratory chain. The immediate electron acceptor for the enzyme is believed to be ubiquinone. This Bos taurus (Bovine) protein is NADH dehydrogenase [ubiquinone] 1 beta subcomplex subunit 8, mitochondrial (NDUFB8).